A 146-amino-acid polypeptide reads, in one-letter code: Vascular endothelial growth factor isoform GtVF (146 aa).

A signal peptide spans 1 to 24; that stretch reads MAAYLLAVAILFCIQGWPSGTVQG. Gln-25 is modified (pyrrolidone carboxylic acid). Disulfide bonds link Cys-38–Cys-80, Cys-69–Cys-115, and Cys-73–Cys-117. The segment at 116–146 is disordered; that stretch reads ECRPRSRSGVDSGKRKRNPEEGEPRAKFPFV. Residues 133-146 show a composition bias toward basic and acidic residues; sequence NPEEGEPRAKFPFV.

It belongs to the PDGF/VEGF growth factor family. Snake venom VEGF subfamily. In terms of assembly, homodimer; disulfide-linked. In terms of tissue distribution, expressed by the venom gland.

Its subcellular location is the secreted. Snake venom VEGFs that may contribute to venom dispersion and prey subjugation by inducing vascular permeability and hypotension. This protein induces an increase in capillary permeability after intradermal injection, in a VEGFR-2 (KDR) dependent manner. In addition, it provokes a drastic hypotensive effect after intravenous injection. The hypotension is mediated by nitric oxide (NO), which is produced by VEGF-activated endothelium NO synthase. Also induces angiogenesis in vitro. Unlike other crotalid VEGFs, this protein probably interacts with VEGF receptor-2 (KDR). This Gloydius tsushimaensis (Tsushima Island pitviper) protein is Vascular endothelial growth factor isoform GtVF.